A 412-amino-acid polypeptide reads, in one-letter code: MFWGLIMEPNKRYTQVVEKPFHISQAAMDISTGDNDPCQVMVVVDGKNFLVCTLQKGKIIQVPLDLYFKSGDSVSFLTNGKCNVHLTGYLDPEFEEDLEDEEEAEEEEEEEEAPPLVPAKNKRKLENANDATANKKAKPDKKAGKNSAPAAESDSDDDDEDQLQKFLDGEDIDTDENDESFKMNTSAEGDDSDEEDDDEDEEDEEDDDEDDEEEEEAPKKKKKQPAAEQDSTLDTSKESVDMSKLSKSQKRRLKKKLQQQAKQQPQVNGVDKPKKEEPQQKAEKKKPEAKKEEAPVEKKEKKQIAGGVSIEDLKVGSGPVAKAGKVVMVYYEGRLKQNNKMFDNCVKGPGFKFRLGSKEVISGWDVGIAGMKVGGKRKIVCPPAMAYGAKGSPPVIPPNSTLVFEVDLKNVK.

3 stretches are compositionally biased toward acidic residues: residues 95 to 113 (EEDL…EEEA), 169 to 178 (GEDIDTDEND), and 188 to 216 (EGDD…EEEE). A disordered region spans residues 95–304 (EEDLEDEEEA…PVEKKEKKQI (210 aa)). Basic residues predominate over residues 247–257 (KSQKRRLKKKL). The segment covering 271–303 (DKPKKEEPQQKAEKKKPEAKKEEAPVEKKEKKQ) has biased composition (basic and acidic residues). Positions 324-412 (GKVVMVYYEG…VFEVDLKNVK (89 aa)) constitute a PPIase FKBP-type domain.

The protein belongs to the FKBP-type PPIase family. In terms of processing, phosphorylated by a nuclear kinase in the presence of Mg(2+) and ATP.

The protein resides in the nucleus. It carries out the reaction [protein]-peptidylproline (omega=180) = [protein]-peptidylproline (omega=0). Its activity is regulated as follows. Inhibited by both FK506 and rapamycin. Its function is as follows. PPIases accelerate the folding of proteins. It catalyzes the cis-trans isomerization of proline imidic peptide bonds in oligopeptides. Binds double-stranded DNA in vitro. The sequence is that of 46 kDa FK506-binding nuclear protein (FKBP46) from Spodoptera frugiperda (Fall armyworm).